The primary structure comprises 303 residues: Recombination-associated protein RdgC (303 aa).

The protein belongs to the RdgC family.

It is found in the cytoplasm. It localises to the nucleoid. In terms of biological role, may be involved in recombination. The polypeptide is Recombination-associated protein RdgC (Edwardsiella ictaluri (strain 93-146)).